The primary structure comprises 190 residues: Protein shisa-like-2A (190 aa).

Transmembrane regions (helical) follow at residues 48–68 and 70–90; these read SFFP…LIGL and VAAV…YLFI.

It belongs to the shisa family.

It localises to the membrane. The chain is Protein shisa-like-2A from Homo sapiens (Human).